The primary structure comprises 111 residues: NADH-ubiquinone oxidoreductase chain 3 (111 aa).

A run of 3 helical transmembrane segments spans residues Met-1–Gly-21, Phe-56–Ile-76, and Leu-84–Tyr-104.

Belongs to the complex I subunit 3 family.

It localises to the mitochondrion membrane. It carries out the reaction a ubiquinone + NADH + 5 H(+)(in) = a ubiquinol + NAD(+) + 4 H(+)(out). In terms of biological role, core subunit of the mitochondrial membrane respiratory chain NADH dehydrogenase (Complex I) that is believed to belong to the minimal assembly required for catalysis. Complex I functions in the transfer of electrons from NADH to the respiratory chain. The immediate electron acceptor for the enzyme is believed to be ubiquinone. The sequence is that of NADH-ubiquinone oxidoreductase chain 3 (ND3) from Ascaris suum (Pig roundworm).